The following is a 219-amino-acid chain: Large ribosomal subunit protein uL4 (219 aa).

Residues 43–101 (AAARQGTHKTKRRGEVRGGGKKPYRQKGTGRARQGSTRAPQFAGGGVVHGPQPRDYSQR) are disordered. Basic residues predominate over residues 61–72 (GGKKPYRQKGTG).

This sequence belongs to the universal ribosomal protein uL4 family. Part of the 50S ribosomal subunit.

Functionally, one of the primary rRNA binding proteins, this protein initially binds near the 5'-end of the 23S rRNA. It is important during the early stages of 50S assembly. It makes multiple contacts with different domains of the 23S rRNA in the assembled 50S subunit and ribosome. In terms of biological role, forms part of the polypeptide exit tunnel. This chain is Large ribosomal subunit protein uL4, found in Streptomyces coelicolor (strain ATCC BAA-471 / A3(2) / M145).